A 422-amino-acid chain; its full sequence is Probable glucuronosyltransferase Os01g0926400 (422 aa).

At 1–8 the chain is on the cytoplasmic side; sequence MGTRPCAG. A helical; Signal-anchor for type II membrane protein transmembrane segment spans residues 9 to 29; it reads VASAVAAAVAVLLLAVSCFAA. Topologically, residues 30–422 are lumenal; sequence AATTTQKHGR…QGLENDLKPW (393 aa). Residue Asn149 is glycosylated (N-linked (GlcNAc...) asparagine).

This sequence belongs to the glycosyltransferase 47 family.

It localises to the golgi apparatus membrane. Its function is as follows. Involved in the synthesis of glucuronoxylan hemicellulose in secondary cell walls. This is Probable glucuronosyltransferase Os01g0926400 from Oryza sativa subsp. japonica (Rice).